The primary structure comprises 66 residues: Type 3 secretion system chaperone YscE (66 aa).

It belongs to the YscE family. Component of the heterodimeric YscE-YscG chaperone. The YscE-YscG chaperone forms a stable ternary complex with YscF/SctF.

It localises to the cytoplasm. Its function is as follows. Chaperone of the type III secretion system (T3SS), also called injectisome, which is used to inject bacterial effector proteins into eukaryotic host cells. Along with YscG, prevents premature polymerization of the YscF/SctF needle protein within the cytoplasm. Required for Yop secretion. In Yersinia enterocolitica, this protein is Type 3 secretion system chaperone YscE.